Reading from the N-terminus, the 287-residue chain is 4-diphosphocytidyl-2-C-methyl-D-erythritol kinase (287 aa).

Residue Lys12 is part of the active site. 97-107 (PMGGGLGGGSS) contacts ATP. Asp139 is a catalytic residue.

It belongs to the GHMP kinase family. IspE subfamily.

The enzyme catalyses 4-CDP-2-C-methyl-D-erythritol + ATP = 4-CDP-2-C-methyl-D-erythritol 2-phosphate + ADP + H(+). Its pathway is isoprenoid biosynthesis; isopentenyl diphosphate biosynthesis via DXP pathway; isopentenyl diphosphate from 1-deoxy-D-xylulose 5-phosphate: step 3/6. In terms of biological role, catalyzes the phosphorylation of the position 2 hydroxy group of 4-diphosphocytidyl-2C-methyl-D-erythritol. This chain is 4-diphosphocytidyl-2-C-methyl-D-erythritol kinase, found in Marinobacter nauticus (strain ATCC 700491 / DSM 11845 / VT8) (Marinobacter aquaeolei).